The sequence spans 437 residues: MQLPRWWELGDPCAWTGQGRGTRRMSPATTGTFLLTVYTIFSKVHSDRNVYPSAGVLFVHVLEREYFKGEFPPYPKPGEISNDPITFNTNLMGYPDRPGWLRYIQRTPYSDGVLYGSPTAENVGKPTIIEITAYNRRTFETARHNLIINIMSAEDFPLPYQAEFFIKNMNVEEMLASEVLGDFLGAVKNVWQPERLNAINITSALDRGGRVPLPINDLKEGVYVMVGADVPFSSCLREVENPQNQLRCSQEMEPVITCDKKFRTQFYIDWCKISLVDKTKQVSTYQEVIRGEGILPDGGEYKPPSDSLKSRDYYTDFLITLAVPSAVALVLFLILAYIMCCRREGVEKRNMQTPDIQLVHHSAIQKSTKELRDMSKNREIAWPLSTLPVFHPVTGEIIPPLHTDNYDSTNMPLMQTQQNLPHQTQIPQQQTTGKWYP.

Topologically, residues 1-317 (MQLPRWWELG…LKSRDYYTDF (317 aa)) are extracellular. Residue Asn200 is glycosylated (N-linked (GlcNAc...) asparagine). The helical transmembrane segment at 318 to 338 (LITLAVPSAVALVLFLILAYI) threads the bilayer. Residues 339–437 (MCCRREGVEK…QQQTTGKWYP (99 aa)) are Cytoplasmic-facing.

The protein belongs to the sarcoglycan alpha/epsilon family. Post-translationally, N-glycosylated. In terms of processing, ubiquitinated, leading to its degradation by the proteasome.

Its subcellular location is the cell membrane. The protein localises to the sarcolemma. The protein resides in the cytoplasm. It is found in the cytoskeleton. It localises to the cell projection. Its subcellular location is the dendrite. The protein localises to the golgi apparatus. Component of the sarcoglycan complex, a subcomplex of the dystrophin-glycoprotein complex which forms a link between the F-actin cytoskeleton and the extracellular matrix. In Macaca fascicularis (Crab-eating macaque), this protein is Epsilon-sarcoglycan.